The chain runs to 193 residues: Large ribosomal subunit protein bL21 (193 aa).

This sequence belongs to the bacterial ribosomal protein bL21 family. As to quaternary structure, part of the 50S ribosomal subunit. Contacts protein L20.

Its function is as follows. This protein binds to 23S rRNA in the presence of protein L20. The protein is Large ribosomal subunit protein bL21 of Ruegeria pomeroyi (strain ATCC 700808 / DSM 15171 / DSS-3) (Silicibacter pomeroyi).